A 258-amino-acid chain; its full sequence is MARPPMHGSVIVPDWHETVEGKEYLACILRKNRRREFGLLERPVLPPSVVIDTASYKIFVSGKSGVGKTALVAKLAGLEVPIVHHETTGIQTTVVFWPAKLKASDCVVMFRFEFWDCGESALKKFDHMLPACKENADAFLFLFSFTDRASFEDLPGQLTRVAGEAPGLVKIVIGSKFDQYMHTDVPARDLTAFRQAWELPLFRVKSVPGRRLADGRTLDGRAGLADTAHVLNGLAEQLWHQDQVAAGLLPSSPESAPG.

Residues 51-258 (IDTASYKIFV…LPSSPESAPG (208 aa)) form a small GTPase-like region. Ser-64, Gly-65, Gly-67, Lys-68, Thr-69, Ala-70, Ile-82, His-84, Thr-87, Lys-176, Asp-178, and Ser-206 together coordinate GTP.

The protein belongs to the small GTPase superfamily. Rab family. In terms of assembly, interacts with FUZ. Associates with the CPLANE (ciliogenesis and planar polarity effectors) complex via its interaction with FUZ.

The protein localises to the cytoplasm. Its subcellular location is the cytoskeleton. It localises to the cilium basal body. The protein resides in the microtubule organizing center. It is found in the centrosome. The protein localises to the centriole. Required for efficient primary cilia initiation, regulating a late step in cilia initiation. Plays a role in the final maturation of the mother centriole and ciliary vesicle that allows extension of the ciliary axoneme. This Mus musculus (Mouse) protein is Ciliogenesis and planar polarity effector 2 (Cplane2).